Here is a 231-residue protein sequence, read N- to C-terminus: Potassium/proton antiporter CemA (231 aa).

4 consecutive transmembrane segments (helical) span residues 7 to 27 (FIPL…SFTF), 104 to 124 (IHTI…SVYS), 154 to 174 (ILFL…ELMI), and 189 to 209 (IISF…KYWI).

It belongs to the CemA family.

Its subcellular location is the plastid. It localises to the chloroplast inner membrane. The catalysed reaction is K(+)(in) + H(+)(out) = K(+)(out) + H(+)(in). In terms of biological role, contributes to K(+)/H(+) antiport activity by supporting proton efflux to control proton extrusion and homeostasis in chloroplasts in a light-dependent manner to modulate photosynthesis. Prevents excessive induction of non-photochemical quenching (NPQ) under continuous-light conditions. Indirectly promotes efficient inorganic carbon uptake into chloroplasts. The protein is Potassium/proton antiporter CemA of Pisum sativum (Garden pea).